A 318-amino-acid chain; its full sequence is Mitochondrial coenzyme A transporter SLC25A42 (318 aa).

Solcar repeat units lie at residues 31-117, 129-214, and 224-312; these read RQVL…YKRI, LPPW…LKSL, and PYPF…MQIL. The next 6 helical transmembrane spans lie at 33-53, 89-109, 135-155, 186-206, 230-250, and 293-313; these read VLSS…AVAP, LWRG…IQFS, LFAG…LDLV, LYHG…LSFF, MIFG…LDVV, and VKGP…QILL.

It belongs to the mitochondrial carrier (TC 2.A.29) family.

Its subcellular location is the mitochondrion inner membrane. The catalysed reaction is ADP(out) + CoA(in) = ADP(in) + CoA(out). It catalyses the reaction 3'-dephospho-CoA(in) + ADP(out) = 3'-dephospho-CoA(out) + ADP(in). It carries out the reaction adenosine 3',5'-bisphosphate(in) + ADP(out) = adenosine 3',5'-bisphosphate(out) + ADP(in). The enzyme catalyses AMP(in) + ADP(out) = AMP(out) + ADP(in). The catalysed reaction is dADP(in) + ADP(out) = dADP(out) + ADP(in). It catalyses the reaction ADP(in) + ATP(out) = ADP(out) + ATP(in). Functionally, mitochondrial carrier mediating the transport of coenzyme A (CoA) in mitochondria in exchange for intramitochondrial (deoxy)adenine nucleotides and adenosine 3',5'-diphosphate. The protein is Mitochondrial coenzyme A transporter SLC25A42 (SLC25A42) of Homo sapiens (Human).